Here is a 769-residue protein sequence, read N- to C-terminus: Neprilysin-21 (769 aa).

Residues 1–26 (MKPENGAATWHPAKRSCLGRLTTLET) are Cytoplasmic-facing. A helical; Signal-anchor for type II membrane protein membrane pass occupies residues 27–47 (LLLVFLGLLITALLSVLFLWL). At 48–769 (WVLDGYKTFT…MNPERKCQVW (722 aa)) the chain is on the extracellular side. N-linked (GlcNAc...) asparagine glycosylation is present at Asn69. The region spanning 85–769 (VCTSRECVRL…MNPERKCQVW (685 aa)) is the Peptidase M13 domain. Disulfide bonds link Cys86–Cys91, Cys109–Cys754, Cys117–Cys714, Cys173–Cys428, and Cys638–Cys766. 7 N-linked (GlcNAc...) asparagine glycosylation sites follow: Asn221, Asn240, Asn272, Asn307, Asn356, Asn412, and Asn506. Position 601 (His601) interacts with Zn(2+). Residue Glu602 is part of the active site. Residues His605 and Glu663 each contribute to the Zn(2+) site. Asp667 (proton donor) is an active-site residue. Asn684 and Asn698 each carry an N-linked (GlcNAc...) asparagine glycan.

It belongs to the peptidase M13 family. Zn(2+) is required as a cofactor.

The protein resides in the cell membrane. Functionally, probable cell surface protease. The sequence is that of Neprilysin-21 (nep-21) from Caenorhabditis elegans.